A 2417-amino-acid chain; its full sequence is Protein pad-1 (2417 aa).

4 disordered regions span residues 409–437, 449–475, 994–1029, and 1957–2032; these read SSNSSSLKKSPRKIQQSLKNPRKPGDREG, SNKDDDVTSVTSSAAANASSAPPPDEE, TSTGEDSGDPSAAGAAGILRSSSPDPDVVPAFDDDT, and SMSN…RRDP. 2 stretches are compositionally biased toward low complexity: residues 456–468 and 1002–1024; these read TSVTSSAAANASS and DPSAAGAAGILRSSSPDPDVVPA. Residues 1969–1982 are compositionally biased toward polar residues; that stretch reads DNPSGSTRNSTLSL. Basic and acidic residues predominate over residues 2003–2014; that stretch reads SKSENMKIEKKS. The segment covering 2015–2025 has biased composition (polar residues); it reads SSNLRASIKDT.

It belongs to the DOP1 family.

Its function is as follows. May be involved in protein traffic between late Golgi and early endosomes. Essential for cell patterning during gastrulation. The protein is Protein pad-1 (pad-1) of Caenorhabditis elegans.